Reading from the N-terminus, the 175-residue chain is Gamma-crystallin B (175 aa).

2 Beta/gamma crystallin 'Greek key' domains span residues 2–40 (GKITFYEDRAFQGRSYECTTDCPNLQPYFSRCNSIRVES) and 41–83 (GCWM…CLIP). The segment at 84-88 (PHSGA) is connecting peptide. Beta/gamma crystallin 'Greek key' domains lie at 89–129 (YRMK…NVLE) and 130–172 (GSWI…RRVM).

The protein belongs to the beta/gamma-crystallin family. Monomer.

Functionally, crystallins are the dominant structural components of the vertebrate eye lens. The sequence is that of Gamma-crystallin B (CRYGB) from Homo sapiens (Human).